Reading from the N-terminus, the 322-residue chain is DNA repair and recombination protein RadA (322 aa).

105 to 112 (GMFGSGKT) is a binding site for ATP.

It belongs to the eukaryotic RecA-like protein family.

Involved in DNA repair and in homologous recombination. Binds and assemble on single-stranded DNA to form a nucleoprotein filament. Hydrolyzes ATP in a ssDNA-dependent manner and promotes DNA strand exchange between homologous DNA molecules. The chain is DNA repair and recombination protein RadA from Methanococcus maripaludis (Methanococcus deltae).